The primary structure comprises 115 residues: Double-headed protease inhibitor, submandibular gland (115 aa).

Kazal-like domains are found at residues 6 to 66 (IGRE…ACDI) and 67 to 115 (ECTE…HGEC). Disulfide bonds link cysteine 12-cysteine 46, cysteine 24-cysteine 43, cysteine 32-cysteine 64, cysteine 68-cysteine 97, cysteine 75-cysteine 94, and cysteine 83-cysteine 115.

Its subcellular location is the secreted. In terms of biological role, this inhibitor is composed of two homologous actively inhibiting halves: one which inhibits trypsin, the other which inhibits elastase. The polypeptide is Double-headed protease inhibitor, submandibular gland (Canis lupus familiaris (Dog)).